Reading from the N-terminus, the 160-residue chain is Putative 4-hydroxy-4-methyl-2-oxoglutarate aldolase (160 aa).

Substrate is bound by residues 75-78 and Arg-97; that span reads GDLI. A divalent metal cation is bound at residue Asp-98.

It belongs to the class II aldolase/RraA-like family. In terms of assembly, homotrimer. A divalent metal cation serves as cofactor.

It catalyses the reaction 4-hydroxy-4-methyl-2-oxoglutarate = 2 pyruvate. The catalysed reaction is oxaloacetate + H(+) = pyruvate + CO2. Catalyzes the aldol cleavage of 4-hydroxy-4-methyl-2-oxoglutarate (HMG) into 2 molecules of pyruvate. Also contains a secondary oxaloacetate (OAA) decarboxylase activity due to the common pyruvate enolate transition state formed following C-C bond cleavage in the retro-aldol and decarboxylation reactions. The protein is Putative 4-hydroxy-4-methyl-2-oxoglutarate aldolase of Rhodospirillum centenum (strain ATCC 51521 / SW).